A 198-amino-acid chain; its full sequence is MSNVRVSNGSPSLERMDARQAEHPKPSACRNLFGPVDHEELTRDLEKHCRDMEEASQRKWNFDFQNHKPLEGKYEWQEVEKGSLPEFYYRPPRPPKGACKVPAQESQDVSGSRPAAPLIGAPANSEDTHLVDPKTDPSDSQTGLAEQCAGIRKRPATDDSSTQNKRANRTEENVSDGSPNAGSVEQTPKKPGLRRRQT.

Residues methionine 1 to proline 11 are compositionally biased toward polar residues. The disordered stretch occupies residues methionine 1–glycine 34. The residue at position 10 (serine 10) is a Phosphoserine; by UHMK1. The segment covering glutamate 14–lysine 25 has biased composition (basic and acidic residues). An interaction with CDK2 region spans residues aspartate 51–proline 91. Residue tyrosine 74 is modified to Phosphotyrosine; by SRC. Positions proline 85–threonine 198 are disordered. Tyrosine 88 is subject to Phosphotyrosine; by ABL, LYN, SRC and JAK2. Position 89 is a phosphotyrosine (tyrosine 89). Positions glutamate 126–proline 137 are enriched in basic and acidic residues. Positions lysine 153–arginine 169 match the Nuclear localization signal motif. A Phosphothreonine; by CaMK1, PKB/AKT1 and PIM1 modification is found at threonine 157. The residue at position 170 (threonine 170) is a Phosphothreonine. A compositionally biased stretch (polar residues) spans serine 175–glutamine 186. At threonine 187 the chain carries Phosphothreonine; by PKB/AKT1, CDK1 and CDK2. Threonine 198 carries the post-translational modification Phosphothreonine; by CaMK1, PKB/AKT1, RPS6KA1, RPS6KA3 and PIM1.

The protein belongs to the CDI family. Forms a ternary complex composed of CCNE1, CDK2 and CDKN1B. Interacts directly with CCNE1; the interaction is inhibited by CDK2-dependent phosphorylation on Thr-187. Interacts with COPS5, subunit of the COP9 signalosome complex; the interaction leads to CDKN1B degradation. Interacts with NUP50; the interaction leads to nuclear import and degradation of phosphorylated CDKN1B. Interacts with CCND1 and SNX6. Interacts (Thr-198-phosphorylated form) with 14-3-3 proteins, binds strongly YWHAQ, weakly YWHAE and YWHAH, but not YWHAB nor YWHAZ; the interaction with YWHAQ results in translocation to the cytoplasm. Interacts with AKT1 and LYN; the interactions lead to cytoplasmic mislocation, phosphorylation of CDKN1B and inhibition of cell cycle arrest. Forms a ternary complex with CCNA2 and CDK2; CDKN1B inhibits the kinase activity of CDK2 through conformational rearrangements. Interacts (unphosphorylated form) with CDK2. Forms a complex with CDK2 and SPDYA, but does not directly interact with SPDYA. Forms a ternary complex composed of cyclin D, CDK4 and CDKN1B. Interacts (phosphorylated on Tyr-88 and Tyr-89) with CDK4; the interaction is required for cyclin D and CDK4 complex assembly, induces nuclear translocation and activates the CDK4 kinase activity. Interacts with GRB2. Interacts with PIM1. Identified in a complex with SKP1, SKP2 and CKS1B. Interacts with UHMK1; the interaction leads to cytoplasmic mislocation, phosphorylation of CDKN1B and inhibition of cell cycle arrest. Also interacts with CDK1. Dephosphorylated on Thr-187 by PPM1H, leading to CDKN1B stability. Interacts with HSPA8; the interaction may be associated with susceptibility to ubiquitination. In terms of processing, phosphorylated; phosphorylation occurs on serine, threonine and tyrosine residues. Phosphorylation on Ser-10 is the major site of phosphorylation in resting cells, takes place at the G(0)-G(1) phase and leads to protein stability. Phosphorylation on other sites is greatly enhanced by mitogens, growth factors, cMYC and in certain cancer cell lines. The phosphorylated form found in the cytoplasm is inactivate. Phosphorylation on Thr-198 is required for interaction with 14-3-3 proteins. Phosphorylation on Thr-187, by CDK1 and CDK2 leads to protein ubiquitination and proteasomal degradation. Tyrosine phosphorylation promotes this process. Phosphorylation by PKB/AKT1 can be suppressed by LY294002, an inhibitor of the catalytic subunit of PI3K. Phosphorylation on Tyr-88 and Tyr-89 has no effect on binding CDK2, but is required for binding CDK4. Dephosphorylated on tyrosine residues by G-CSF. Ubiquitinated; in the cytoplasm by the KPC complex (composed of RNF123/KPC1 and UBAC1/KPC2) and, in the nucleus, by SCF(SKP2). The latter requires prior phosphorylation on Thr-187. Ubiquitinated; by a TRIM21-containing SCF(SKP2)-like complex; leads to its degradation. Post-translationally, subject to degradation in the lysosome. Interaction with SNX6 promotes lysosomal degradation. In terms of tissue distribution, expressed in kidney (at protein level). Expressed in all tissues tested. Highest levels in skeletal muscle, lowest in liver and kidney.

The protein localises to the nucleus. Its subcellular location is the cytoplasm. It is found in the endosome. In terms of biological role, important regulator of cell cycle progression. Inhibits the kinase activity of CDK2 bound to cyclin A, but has little inhibitory activity on CDK2 bound to SPDYA. Involved in G1 arrest. Potent inhibitor of cyclin E- and cyclin A-CDK2 complexes. Forms a complex with cyclin type D-CDK4 complexes and is involved in the assembly, stability, and modulation of CCND1-CDK4 complex activation. Acts either as an inhibitor or an activator of cyclin type D-CDK4 complexes depending on its phosphorylation state and/or stoichometry. This is Cyclin-dependent kinase inhibitor 1B from Homo sapiens (Human).